The chain runs to 760 residues: 5-methyltetrahydropteroyltriglutamate--homocysteine methyltransferase (760 aa).

Residues 17–20 (RELK) and Lys118 each bind 5-methyltetrahydropteroyltri-L-glutamate. Residues 434–436 (IGS) and Glu487 each bind L-homocysteine. L-methionine is bound by residues 434 to 436 (IGS) and Glu487. Residues 518–519 (RC) and Trp564 each bind 5-methyltetrahydropteroyltri-L-glutamate. Asp602 contacts L-homocysteine. Asp602 provides a ligand contact to L-methionine. Glu608 contacts 5-methyltetrahydropteroyltri-L-glutamate. Zn(2+) contacts are provided by His644, Cys646, and Glu668. His697 (proton donor) is an active-site residue. Cys729 lines the Zn(2+) pocket.

It belongs to the vitamin-B12 independent methionine synthase family. Requires Zn(2+) as cofactor.

It carries out the reaction 5-methyltetrahydropteroyltri-L-glutamate + L-homocysteine = tetrahydropteroyltri-L-glutamate + L-methionine. The protein operates within amino-acid biosynthesis; L-methionine biosynthesis via de novo pathway; L-methionine from L-homocysteine (MetE route): step 1/1. Catalyzes the transfer of a methyl group from 5-methyltetrahydrofolate to homocysteine resulting in methionine formation. The protein is 5-methyltetrahydropteroyltriglutamate--homocysteine methyltransferase of Buchnera aphidicola subsp. Cinara cedri (strain Cc).